The primary structure comprises 226 residues: Putative mitochondrial outer membrane protein porin 5 (226 aa).

The protein belongs to the eukaryotic mitochondrial porin (TC 1.B.8.1) family.

Its subcellular location is the mitochondrion outer membrane. Its function is as follows. Putative channel that allows diffusion of small hydrophilic molecules through membranes. The protein is Putative mitochondrial outer membrane protein porin 5 (VDAC5) of Arabidopsis thaliana (Mouse-ear cress).